The sequence spans 233 residues: Homeobox protein ceh-30 (233 aa).

Positions 50–85 (NNSTYSHDLDPSPQSVRSDLSTSPRASSPDRNSPMS) are enriched in polar residues. 2 disordered regions span residues 50–93 (NNST…KART) and 206–233 (FQATSSSNSPSTHKSSESPQLDVSSNSD). A DNA-binding region (homeobox) is located at residues 88–147 (SRKARTIFTDKQLQELENTFEKQKYLSVQDRMDLAHRMGLSDTQVKTWYQNRRTKWKRQA). Polar residues predominate over residues 224-233 (PQLDVSSNSD).

The protein localises to the nucleus. In terms of biological role, cell-type specific anti-apoptotic transcription factor required for the sexually dimorphic survival of the male-specific CEM (cephalic male) sensory neurons during sex determination. In hermaphrodites, the homologous cells undergo programmed cell death due to transcriptional repression of ceh-30 by tra-1, the terminal regulator in the sex determination pathway. The protein is Homeobox protein ceh-30 of Caenorhabditis briggsae.